Here is a 255-residue protein sequence, read N- to C-terminus: uncharacterized protein (255 aa).

In terms of domain architecture, HTH deoR-type spans 4 to 59 (RNERLNLIRKRVDQYGQVAVKDLAIFLQVTPETVRKDLETLENDKLITRTHGGAIQ). A DNA-binding region (H-T-H motif) is located at residues 21-40 (VAVKDLAIFLQVTPETVRKD).

This is an uncharacterized protein from Staphylococcus epidermidis (strain ATCC 12228 / FDA PCI 1200).